The primary structure comprises 147 residues: Hemoglobin subunit beta (147 aa).

Val2 carries the post-translational modification N-acetylvaline. The Globin domain occupies 3–147; it reads HLTPEEKSAV…VANALAHKYH (145 aa). Thr13 is subject to Phosphothreonine. Residue Ser45 is modified to Phosphoserine. At Lys60 the chain carries N6-acetyllysine. His64 contacts heme b. The residue at position 83 (Lys83) is an N6-acetyllysine. His93 serves as a coordination point for heme b. Cys94 carries the post-translational modification S-nitrosocysteine. Residue Lys145 is modified to N6-acetyllysine.

Belongs to the globin family. As to quaternary structure, heterotetramer of two alpha chains and two beta chains. In terms of tissue distribution, red blood cells.

Its function is as follows. Involved in oxygen transport from the lung to the various peripheral tissues. This chain is Hemoglobin subunit beta (HBB), found in Gorilla gorilla gorilla (Western lowland gorilla).